We begin with the raw amino-acid sequence, 346 residues long: Olfactory receptor 8G5 (346 aa).

Residues 1-60 (MIIYKQGITFLQKENNNTIHLNTMFFLSPAETHQRMAAENHSFVTKFILVGLTEKSELQL) lie on the Extracellular side of the membrane. N16 and N40 each carry an N-linked (GlcNAc...) asparagine glycan. The chain crosses the membrane as a helical span at residues 61–81 (PLFLVFLGIYVVTVLGNLGMI). At 82–89 (TLIGLSSH) the chain is on the cytoplasmic side. The helical transmembrane segment at 90–110 (LHTPMYCFLSSLSFIDFCHST) threads the bilayer. The Extracellular segment spans residues 111–134 (VITPKMLVNFVTEKNIISYPECMT). The cysteines at positions 132 and 214 are disulfide-linked. Residues 135 to 155 (QLYFFLVFAIAECHMLAAMAY) form a helical membrane-spanning segment. Residues 156 to 174 (DGYVAICSPLLYSIIISNK) lie on the Cytoplasmic side of the membrane. A helical membrane pass occupies residues 175–195 (ACFSLILVVYVIGLICASAHI). Over 196 to 232 (GCMFRVQFCKFDVINHYFCDLISILKLSCSSTYINEL) the chain is Extracellular. A helical membrane pass occupies residues 233 to 252 (LILIFSGINILVPSLTILSS). The Cytoplasmic segment spans residues 253-272 (YIFIIASILRIRYTEGRSKA). A helical membrane pass occupies residues 273–293 (FSTCSSHISAVSVFFGSAAFM). Topologically, residues 294–306 (YLQPSSVSSMDQG) are extracellular. A helical membrane pass occupies residues 307–327 (KVSSVFYTIVVPMLNPLIYSL). Residues 328 to 346 (RNKDVHVALKKTLGKRTFL) are Cytoplasmic-facing.

It belongs to the G-protein coupled receptor 1 family.

It is found in the cell membrane. Its function is as follows. Odorant receptor. This is Olfactory receptor 8G5 (OR8G5) from Homo sapiens (Human).